The primary structure comprises 236 residues: 2-C-methyl-D-erythritol 4-phosphate cytidylyltransferase (236 aa).

This sequence belongs to the IspD/TarI cytidylyltransferase family. IspD subfamily. As to quaternary structure, homodimer.

It catalyses the reaction 2-C-methyl-D-erythritol 4-phosphate + CTP + H(+) = 4-CDP-2-C-methyl-D-erythritol + diphosphate. The protein operates within isoprenoid biosynthesis; isopentenyl diphosphate biosynthesis via DXP pathway; isopentenyl diphosphate from 1-deoxy-D-xylulose 5-phosphate: step 2/6. Its function is as follows. Catalyzes the formation of 4-diphosphocytidyl-2-C-methyl-D-erythritol from CTP and 2-C-methyl-D-erythritol 4-phosphate (MEP). The polypeptide is 2-C-methyl-D-erythritol 4-phosphate cytidylyltransferase (Salmonella heidelberg (strain SL476)).